Consider the following 880-residue polypeptide: Paramyosin (880 aa).

The nonhelical region stretch occupies residues 1–34 (MSGSLYRSPSAALYKSPSMSAFGGLPAAFGSMSV). Residues 35 to 859 (ADLGSLTRLE…LIRAKHRHQL (825 aa)) are a coiled coil. Residues 860-880 (LRAKMLQRQKFTFSKMSNRDN) form a nonhelical region region.

It belongs to the paramyosin family. In terms of assembly, homodimer.

The protein localises to the cytoplasm. It is found in the myofibril. In terms of biological role, paramyosin is a major structural component of many thick filaments isolated from invertebrate muscles. The polypeptide is Paramyosin (Brugia malayi (Filarial nematode worm)).